A 217-amino-acid chain; its full sequence is UPF0502 protein ASA_1460 (217 aa).

It belongs to the UPF0502 family.

The polypeptide is UPF0502 protein ASA_1460 (Aeromonas salmonicida (strain A449)).